Consider the following 282-residue polypeptide: 2-dehydro-3-deoxyphosphooctonate aldolase (282 aa).

Belongs to the KdsA family.

It localises to the cytoplasm. The enzyme catalyses D-arabinose 5-phosphate + phosphoenolpyruvate + H2O = 3-deoxy-alpha-D-manno-2-octulosonate-8-phosphate + phosphate. It participates in carbohydrate biosynthesis; 3-deoxy-D-manno-octulosonate biosynthesis; 3-deoxy-D-manno-octulosonate from D-ribulose 5-phosphate: step 2/3. The protein operates within bacterial outer membrane biogenesis; lipopolysaccharide biosynthesis. The sequence is that of 2-dehydro-3-deoxyphosphooctonate aldolase from Bordetella avium (strain 197N).